Consider the following 92-residue polypeptide: Putative membrane protein insertion efficiency factor (92 aa).

The protein belongs to the UPF0161 family.

Its subcellular location is the cell inner membrane. Its function is as follows. Could be involved in insertion of integral membrane proteins into the membrane. This chain is Putative membrane protein insertion efficiency factor, found in Synechococcus sp. (strain CC9605).